Here is a 216-residue protein sequence, read N- to C-terminus: Large ribosomal subunit protein uL1 (216 aa).

It belongs to the universal ribosomal protein uL1 family.

The protein is Large ribosomal subunit protein uL1 of Caenorhabditis elegans.